The sequence spans 54 residues: ComX pheromone (54 aa).

Positions 1–46 (MQEIVGYLVKNPEVLDEVMKGRASLLNIDKDQLKSIVDAFGGLQIY) are excised as a propeptide. The 3'-geranyl-2',N2-cyclotryptophan moiety is linked to residue Trp51.

In terms of assembly, interacts directly with the sensor histidine kinase ComP and stimulates its activity. In terms of processing, trp-51 is modified by isoprenylation, probably by geranylation, which is essential for activity. Modified by the tryptophan prenyltransferase ComQ before export to the extracellular environment. The type of isoprenyl derivative differs among the different pherotypes and depends on ComX primary sequence.

It localises to the secreted. In terms of biological role, part of a major quorum-sensing system that regulates the development of genetic competence. Acts through the activation of the two-component regulatory system ComP/ComA composed of a sensor histidine kinase, ComP, and a response regulator, ComA. The polypeptide is ComX pheromone (Bacillus mojavensis).